Consider the following 354-residue polypeptide: Uroporphyrinogen decarboxylase (354 aa).

Substrate contacts are provided by residues 27–31 (RQAGR), Asp-77, Tyr-154, Thr-209, and His-327.

The protein belongs to the uroporphyrinogen decarboxylase family. In terms of assembly, homodimer.

Its subcellular location is the cytoplasm. It carries out the reaction uroporphyrinogen III + 4 H(+) = coproporphyrinogen III + 4 CO2. Its pathway is porphyrin-containing compound metabolism; protoporphyrin-IX biosynthesis; coproporphyrinogen-III from 5-aminolevulinate: step 4/4. Catalyzes the decarboxylation of four acetate groups of uroporphyrinogen-III to yield coproporphyrinogen-III. The protein is Uroporphyrinogen decarboxylase of Pseudomonas putida (strain W619).